The sequence spans 1314 residues: Phosphoribosylformylglycinamidine synthase (1314 aa).

Residues Gly307–Asp318 and Ala674 each bind ATP. Asp675, Glu714, Asn718, and Asp880 together coordinate Mg(2+). ATP is bound at residue Ser882. The region spanning Ile1063–Gly1314 is the Glutamine amidotransferase type-1 domain. Catalysis depends on Cys1156, which acts as the Nucleophile. Residues His1279 and Glu1281 contribute to the active site.

This sequence in the N-terminal section; belongs to the FGAMS family. Monomer.

The protein localises to the cytoplasm. The catalysed reaction is N(2)-formyl-N(1)-(5-phospho-beta-D-ribosyl)glycinamide + L-glutamine + ATP + H2O = 2-formamido-N(1)-(5-O-phospho-beta-D-ribosyl)acetamidine + L-glutamate + ADP + phosphate + H(+). It participates in purine metabolism; IMP biosynthesis via de novo pathway; 5-amino-1-(5-phospho-D-ribosyl)imidazole from N(2)-formyl-N(1)-(5-phospho-D-ribosyl)glycinamide: step 1/2. Phosphoribosylformylglycinamidine synthase involved in the purines biosynthetic pathway. Catalyzes the ATP-dependent conversion of formylglycinamide ribonucleotide (FGAR) and glutamine to yield formylglycinamidine ribonucleotide (FGAM) and glutamate. This chain is Phosphoribosylformylglycinamidine synthase, found in Neisseria gonorrhoeae (strain ATCC 700825 / FA 1090).